The primary structure comprises 582 residues: Guanine nucleotide-binding protein-like NSN1 (582 aa).

The segment covering 1–46 (MVKRSKKSKSKRVTLKQKHKVLKKVKEHHKKKAKDAKKLGLHRKPR) has biased composition (basic residues). The tract at residues 1–58 (MVKRSKKSKSKRVTLKQKHKVLKKVKEHHKKKAKDAKKLGLHRKPRVEKDPGIPNDWP) is disordered. The interval 2-49 (VKRSKKSKSKRVTLKQKHKVLKKVKEHHKKKAKDAKKLGLHRKPRVEK) is basic. Short sequence motifs (nuclear localization signal) lie at residues 5–12 (SKKSKSKR), 22–29 (LKKVKEHH), and 69–76 (VRRARALE). Residues 15–94 (LKQKHKVLKK…RKERAKKRKL (80 aa)) adopt a coiled-coil conformation. The region spanning 127–311 (YKELVKVIEL…LLDCPGVVML (185 aa)) is the CP-type G domain. The DARXP motif signature appears at 145 to 149 (DARDP). Positions 175-178 (NKID) are G4. Position 175–178 (175–178 (NKID)) interacts with GTP. Residues 202–204 (KCS) form a G5 region. Residues 260 to 267 (GLPNVGKS) form a G1 region. A GTP-binding site is contributed by 263–268 (NVGKSS). The interval 281–456 (VGATPGLTRS…NEFNPVIIPS (176 aa)) is intermediate. Residues 286–290 (GLTRS) are G2. GTP-binding positions include 304-307 (DCPG) and G307. The segment at 304-307 (DCPG) is G3. Positions 463-551 (DETMIEDESK…EEDLMDGDYD (89 aa)) are acidic. A disordered region spans residues 469-545 (DESKTQTEEE…KKAGADEEDL (77 aa)). Positions 476–496 (EEEAEHESDDDESMGGEEEEE) are enriched in acidic residues. The segment covering 497–506 (AGKTKEKSET) has biased composition (basic and acidic residues). The stretch at 515-537 (AAESMLNTKKQKAEKKKRKKAKK) forms a coiled coil. The short motif at 522 to 529 (TKKQKAEK) is the Nuclear localization signal 4 element. Residues 523–537 (KKQKAEKKKRKKAKK) show a composition bias toward basic residues.

The protein belongs to the TRAFAC class YlqF/YawG GTPase family. As to quaternary structure, interacts with EBP2 and PES. As to expression, mostly expressed in flowers, siliques and inflorescence apex, and, to a lower extent, in stems and leaves.

The protein localises to the nucleus. It localises to the nucleolus. Functionally, involved in the differentiation of epidermal cells, probably via the regulation of the expression of meristem-related genes (e.g. CLV3, STM, KNAT1, CUC2 and AG) and of leaf polarity-related genes (e.g. YAB5, FIL, AS2, PHB and PHV). May play a role in regulating cellular proliferation. Necessary for flower development, probably by preventing apical dominance through the down-regulation of AG expression. Required for embryogenesis, leaf and cotyledon development, as well as for leaf polarity establishment. Plays an important role in plant growth and senescence by modulating ribosome biogenesis in nucleolus. Possesses GTPAse activity in vitro. Possesses RNA binding activity in vitro. Associates with ribosomes. This is Guanine nucleotide-binding protein-like NSN1 from Arabidopsis thaliana (Mouse-ear cress).